The primary structure comprises 501 residues: MLMSNLLILPLLLPAVCALGLVFIRTHSRLSRIFSIGTMAVTTVVSLLLLIYVMYHKPIALDFGGWQAPFGIQFVGDSLSLLLVTTSSFVVTLIMAYGFGRTEKRAIRYYLPSFILFLTVGVIGSFLTADLFNIYVMFEVMLLASFVLITLGQSVEQLRAAIIYVVLNILGSWLLLLGVGLLYKLTGTLNFTLVAQRLNEMDDKSSIVIVSMVFLIAFSAKAALVLFMWLPKAYAVLNTELAALFAALMTKVGAYALIRFFTLIFDEHSGITHPLLVFLSCITMLIGAFGVLAYRDIKKIAAYQVILSIGFIILGLGTNTIAGVNGAIFYLANDIVVKTLLFFIIGSLVYITGLRQYKSLYGLAKQEPFFGVAFVVMILAIGGVPPFSGFPGKVFIFKGAIENGNYIGLALMIITSLIAMFSLFRIFFVMYLGNENKGEAIVFNKIPTYRKNLIGVLVAMIIVMGLAAPLLFKVTDNATHLNMDDGLYEKMVNPHLIKGDK.

14 helical membrane passes run serine 4 to isoleucine 24, isoleucine 33 to valine 53, leucine 79 to phenylalanine 99, tyrosine 109 to alanine 129, leucine 131 to leucine 151, isoleucine 162 to leucine 182, isoleucine 207 to phenylalanine 227, phenylalanine 245 to phenylalanine 265, proline 274 to tyrosine 294, isoleucine 309 to phenylalanine 329, aspartate 334 to leucine 354, phenylalanine 369 to glycine 389, leucine 409 to valine 429, and asparagine 452 to phenylalanine 472.

The protein belongs to the CPA3 antiporters (TC 2.A.63) subunit D family. In terms of assembly, may form a heterooligomeric complex that consists of seven subunits: mnhA2, mnhB2, mnhC2, mnhD2, mnhE2, mnhF2 and mnhG2.

The protein resides in the cell membrane. The sequence is that of Putative antiporter subunit mnhD2 (mnhD2) from Staphylococcus saprophyticus subsp. saprophyticus (strain ATCC 15305 / DSM 20229 / NCIMB 8711 / NCTC 7292 / S-41).